We begin with the raw amino-acid sequence, 393 residues long: Dual specificity mitogen-activated protein kinase kinase 1 (393 aa).

The interval 1-27 (MPKKKPTPIQLNPAPDGSAVNGTSSAE) is disordered. Residues 68–361 (FEKISELGAG…LKQLMVHAFI (294 aa)) enclose the Protein kinase domain. Residues 74–82 (LGAGNGGVV) and Lys97 each bind ATP. Asp190 acts as the Proton acceptor in catalysis. 2 positions are modified to phosphoserine; by RAF: Ser218 and Ser222. The interval 270 to 307 (ELELLFGCHVEGDAAETPPRPRTPGRPLSSYGMDSRPP) is RAF1-binding. At Thr286 the chain carries Phosphothreonine. At Thr292 the chain carries Phosphothreonine; by MAPK1. Phosphoserine; by PAK is present on Ser298.

It belongs to the protein kinase superfamily. STE Ser/Thr protein kinase family. MAP kinase kinase subfamily. Found in a complex with at least BRAF, HRAS, MAP2K1, MAPK3/ERK1 and RGS14. Forms a heterodimer with MAP2K2/MEK2. Forms heterodimers with KSR2 which further dimerize to form tetramers. Interacts with KSR1 or KSR2 and BRAF; the interaction with KSR1 or KSR2 mediates KSR1-BRAF or KSR2-BRAF dimerization. Interacts with ARBB2, LAMTOR3, MAPK1/ERK2 and RAF1. Interacts with MAPK1/ERK2. Interacts with MORG1. Interacts with PPARG. Interacts with SGK1. Interacts with BIRC6/bruce. Interacts with KAT7; the interaction promotes KAT7 phosphorylation. Interacts with RAF1 and NEK10; the interaction is required for ERK1/2-signaling pathway activation in response to UV irradiation. Interacts with TRAF3IP3. Interacts with MOS. In terms of processing, phosphorylation at Ser-218 and Ser-222 by MAP kinase kinase kinases (BRAF or MEKK1) positively regulates kinase activity. Also phosphorylated at Thr-292 by MAPK1/ERK2 and at Ser-298 by PAK. MAPK1/ERK2 phosphorylation of Thr-292 occurs in response to cellular adhesion and leads to inhibition of Ser-298 phosphorylation by PAK. Autophosphorylated at Ser-218 and Ser-222, autophosphosphorylation is promoted by NEK10 following UV irradiation.

The protein localises to the cytoplasm. The protein resides in the cytoskeleton. Its subcellular location is the microtubule organizing center. It is found in the centrosome. It localises to the spindle pole body. The protein localises to the nucleus. The protein resides in the membrane. The enzyme catalyses L-seryl-[protein] + ATP = O-phospho-L-seryl-[protein] + ADP + H(+). It catalyses the reaction L-threonyl-[protein] + ATP = O-phospho-L-threonyl-[protein] + ADP + H(+). It carries out the reaction L-tyrosyl-[protein] + ATP = O-phospho-L-tyrosyl-[protein] + ADP + H(+). Its activity is regulated as follows. Ras proteins such as HRAS mediate the activation of RAF proteins such as RAF1 or BRAF which in turn activate extracellular signal-regulated kinases (ERK) through MAPK (mitogen-activated protein kinases) and ERK kinases MAP2K1/MEK1 and MAP2K2/MEK2. Activation occurs through phosphorylation of Ser-218 and Ser-222. MAP2K1/MEK1 binds KSR1 or KSR2 releasing the inhibitory intramolecular interaction between KSR1 or KSR2 protein kinase and N-terminal domains. This allows KSR1 or KSR2 dimerization with BRAF leading to BRAF activation and phosphorylation of MAP2K1. MAP2K1/MEK1 is also the target of negative feed-back regulation by its substrate kinases, such as MAPK1/ERK2. These phosphorylate MAP2K1/MEK1 on Thr-292, thereby facilitating dephosphorylation of the activating residues Ser-218 and Ser-222. Inhibited by serine/threonine phosphatase 2A. In terms of biological role, dual specificity protein kinase which acts as an essential component of the MAP kinase signal transduction pathway. Binding of extracellular ligands such as growth factors, cytokines and hormones to their cell-surface receptors activates RAS and this initiates RAF1 activation. RAF1 then further activates the dual-specificity protein kinases MAP2K1/MEK1 and MAP2K2/MEK2. Both MAP2K1/MEK1 and MAP2K2/MEK2 function specifically in the MAPK/ERK cascade, and catalyze the concomitant phosphorylation of a threonine and a tyrosine residue in a Thr-Glu-Tyr sequence located in the extracellular signal-regulated kinases MAPK3/ERK1 and MAPK1/ERK2, leading to their activation and further transduction of the signal within the MAPK/ERK cascade. Activates BRAF in a KSR1 or KSR2-dependent manner; by binding to KSR1 or KSR2 releases the inhibitory intramolecular interaction between KSR1 or KSR2 protein kinase and N-terminal domains which promotes KSR1 or KSR2-BRAF dimerization and BRAF activation. Depending on the cellular context, this pathway mediates diverse biological functions such as cell growth, adhesion, survival and differentiation, predominantly through the regulation of transcription, metabolism and cytoskeletal rearrangements. One target of the MAPK/ERK cascade is peroxisome proliferator-activated receptor gamma (PPARG), a nuclear receptor that promotes differentiation and apoptosis. MAP2K1/MEK1 has been shown to export PPARG from the nucleus. The MAPK/ERK cascade is also involved in the regulation of endosomal dynamics, including lysosome processing and endosome cycling through the perinuclear recycling compartment (PNRC), as well as in the fragmentation of the Golgi apparatus during mitosis. This chain is Dual specificity mitogen-activated protein kinase kinase 1 (Map2k1), found in Mus musculus (Mouse).